The chain runs to 100 residues: Large ribosomal subunit protein bL21 (100 aa).

Belongs to the bacterial ribosomal protein bL21 family. In terms of assembly, part of the 50S ribosomal subunit. Contacts protein L20.

Its function is as follows. This protein binds to 23S rRNA in the presence of protein L20. The polypeptide is Large ribosomal subunit protein bL21 (Wolbachia sp. subsp. Drosophila simulans (strain wRi)).